The primary structure comprises 683 residues: Methionine--tRNA ligase (683 aa).

Residues 15–25 (PYANGSIHLGH) carry the 'HIGH' region motif. Zn(2+) is bound by residues Cys146, Cys149, Cys159, and Cys162. The 'KMSKS' region signature appears at 332–336 (KMSKS). Lys335 is an ATP binding site. The tRNA-binding domain maps to 582–683 (DFAKVDLRIA…QGAQAGMRVM (102 aa)).

Belongs to the class-I aminoacyl-tRNA synthetase family. MetG type 1 subfamily. In terms of assembly, homodimer. Requires Zn(2+) as cofactor.

It localises to the cytoplasm. It catalyses the reaction tRNA(Met) + L-methionine + ATP = L-methionyl-tRNA(Met) + AMP + diphosphate. In terms of biological role, is required not only for elongation of protein synthesis but also for the initiation of all mRNA translation through initiator tRNA(fMet) aminoacylation. This is Methionine--tRNA ligase from Vibrio cholerae serotype O1 (strain ATCC 39541 / Classical Ogawa 395 / O395).